The chain runs to 506 residues: Maturase K (506 aa).

Belongs to the intron maturase 2 family. MatK subfamily.

The protein localises to the plastid. It localises to the chloroplast. Its function is as follows. Usually encoded in the trnK tRNA gene intron. Probably assists in splicing its own and other chloroplast group II introns. This chain is Maturase K, found in Rhododendron tomentosum (Marsh Labrador tea).